The following is a 213-amino-acid chain: MOB kinase activator-like 1 homolog A (213 aa).

Residues C77, C82, H159, and H164 each coordinate Zn(2+).

The protein belongs to the MOB1/phocein family.

The protein is MOB kinase activator-like 1 homolog A (mobA) of Dictyostelium discoideum (Social amoeba).